Here is a 252-residue protein sequence, read N- to C-terminus: MSDWNPSLYLHFAAERSRPAVELLARVPLENVEYVADLGCGPGNSTALLQQRWPAARITGIDSSPAMVAEARSALPDCLFVEADIRNWQPEQALDLIFANASLQWLPDHYELFPHLVSLLSPLGVLAVQMPDNWLEPTHVLMREVAWEQNYPDRGREPLAGVHAYYDILSEAGCEVDIWRTTYYHQMPSHQAIINWVTATGLRPWLQDLTESEQQHFLTRYHQMLEEQYPLQENGQILLAFPRLFIVARRTE.

The protein belongs to the methyltransferase superfamily. Tam family.

Its subcellular location is the cytoplasm. It catalyses the reaction trans-aconitate + S-adenosyl-L-methionine = (E)-3-(methoxycarbonyl)pent-2-enedioate + S-adenosyl-L-homocysteine. Functionally, catalyzes the S-adenosylmethionine monomethyl esterification of trans-aconitate. This is Trans-aconitate 2-methyltransferase from Escherichia coli O17:K52:H18 (strain UMN026 / ExPEC).